We begin with the raw amino-acid sequence, 726 residues long: Sensory/regulatory protein RpfC (726 aa).

Helical transmembrane passes span 23–40 (NLIR…LGWR), 52–72 (TWLI…AILL), 95–115 (IMAI…WVTI), 128–148 (AATA…PYWK), and 152–172 (YLSW…DSLL). The Histidine kinase domain occupies 195–417 (NMSHEFRTPL…VFWFELPMAI (223 aa)). The residue at position 198 (His198) is a Phosphohistidine; by autocatalysis. The region spanning 463–581 (RMLVADDHEA…KLLDTLADLA (119 aa)) is the Response regulatory domain. At Asp512 the chain carries 4-aspartylphosphate. The HPt domain occupies 618–711 (GEEFERQFVR…KAGKDALDAR (94 aa)). At His657 the chain carries Phosphohistidine.

At low DSF concentrations, interacts with RpfF. In terms of processing, autophosphorylated. Activation may require a sequential transfer of a phosphate group from a His in the primary transmitter domain, to an Asp in the receiver domain and to a His in the secondary transmitter domain.

Its subcellular location is the cell inner membrane. The catalysed reaction is ATP + protein L-histidine = ADP + protein N-phospho-L-histidine.. With respect to regulation, binding of DSF to the sensor region causes allosteric change, which facilitates RpfC autophosphorylation. Functionally, hybrid sensor kinase that regulates diverse biological functions through two distinct molecular mechanisms. At low cell density, the extracellular concentration of the diffusible signaling factor (DSF) is below a threshold, and unphosphorylated RpfC is involved in the negative regulation of DSF synthesis, via direct interaction with the DSF synthase RpfF. Interaction prevents synthesis of DSF, which remains at a basal level. This activity does not involve the phosphorelay mechanism and is not dependent on RpfG. Is also member of the two-component regulatory system RpfG/RpfC, which is involved in the perception and response to DSF, which is essential for cell-cell signaling. At high cell density, the level of extracellular DSF increases and binding of DSF to the sensor region of RpfC causes autophosphorylation of RpfC, which results in the release of RpfF and the activation of RpfG via a four-step phosphorelay. Activation of RpfG leads to the positive regulation of biofilm dispersal and the production of virulence factors. The polypeptide is Sensory/regulatory protein RpfC (rpfC) (Xanthomonas campestris pv. campestris (strain ATCC 33913 / DSM 3586 / NCPPB 528 / LMG 568 / P 25)).